We begin with the raw amino-acid sequence, 296 residues long: Calponin-2 (296 aa).

Ser-2 bears the N-acetylserine mark. Lys-8 and Lys-25 each carry N6-acetyllysine. The Calponin-homology (CH) domain occupies 28 to 132 (PQKEAELRSW…SLLALAGKAK (105 aa)). Ser-138 is subject to Phosphoserine. Calponin-like repeat units lie at residues 166-191 (IGLQMGTNKCASQSGMTAYGTRRHLY), 206-231 (ISLQMGTNKCASQVGMTAPGTRRHIY), and 245-269 (MSLQMGYTQGANQSGQVFGLGRQIY). Residues 275–296 (PQGPAADGAPAAAGDCPGPGES) are disordered.

Belongs to the calponin family. In terms of tissue distribution, smooth muscle, and tissues containing significant amounts of smooth muscle.

Thin filament-associated protein that is implicated in the regulation and modulation of smooth muscle contraction. It is capable of binding to actin, calmodulin and tropomyosin. The interaction of calponin with actin inhibits the actomyosin Mg-ATPase activity. The polypeptide is Calponin-2 (CNN2) (Sus scrofa (Pig)).